A 430-amino-acid polypeptide reads, in one-letter code: Gustatory receptor-like 43a (430 aa).

Over 1-31 (MSTGSHSPEAMWSATNFRRHQRKPNQVLHRW) the chain is Cytoplasmic. The chain crosses the membrane as a helical span at residues 32 to 52 (FFKGSAWIIYAIACGLHFFKL). Over 53–79 (HYNERTNQVEESQYHRIWSKIVVVLKV) the chain is Extracellular. A helical transmembrane segment spans residues 80 to 100 (ILLASPYLQYFVLGLGIYIHI). The Cytoplasmic segment spans residues 101 to 110 (TLVQDSKAQN). A helical transmembrane segment spans residues 111–131 (FLMSLIVLGIVIGVLRRLLIF). The Extracellular segment spans residues 132 to 168 (LHLKRDRRFLKHTVNEILHITSALEQKFGMEYKCDST). A helical membrane pass occupies residues 169-189 (LLVVYLAKLWILTVMLDSLWY). Residues 190-277 (KPYFLSSIFL…RDNVSWLSTS (88 aa)) are Cytoplasmic-facing. The chain crosses the membrane as a helical span at residues 278-298 (VYLMIFTCIFNAELLIECSLF). Over 299-306 (AGDELENK) the chain is Extracellular. The chain crosses the membrane as a helical span at residues 307-327 (IYIITDGCLGPVCVPILYVLI). The Cytoplasmic portion of the chain corresponds to 328–396 (LGMCTDRFRD…IILDITCDRE (69 aa)). Residues 397-417 (FVMDYIVTVILTALSLVQYTI) traverse the membrane as a helical segment. Residues 418–430 (STGGNISECVTHK) lie on the Extracellular side of the membrane. N-linked (GlcNAc...) asparagine glycosylation is present at N422.

The protein resides in the cell membrane. The sequence is that of Gustatory receptor-like 43a from Drosophila melanogaster (Fruit fly).